The chain runs to 168 residues: G/U mismatch-specific DNA glycosylase (168 aa).

This sequence belongs to the uracil-DNA glycosylase (UDG) superfamily. TDG/mug family. Binds DNA as a monomer.

The protein resides in the cytoplasm. The enzyme catalyses Specifically hydrolyzes mismatched double-stranded DNA and polynucleotides, releasing free uracil.. Functionally, excises ethenocytosine and uracil, which can arise by alkylation or deamination of cytosine, respectively, from the corresponding mispairs with guanine in ds-DNA. It is capable of hydrolyzing the carbon-nitrogen bond between the sugar-phosphate backbone of the DNA and the mispaired base. The complementary strand guanine functions in substrate recognition. Required for DNA damage lesion repair in stationary-phase cells. This is G/U mismatch-specific DNA glycosylase from Escherichia fergusonii (strain ATCC 35469 / DSM 13698 / CCUG 18766 / IAM 14443 / JCM 21226 / LMG 7866 / NBRC 102419 / NCTC 12128 / CDC 0568-73).